We begin with the raw amino-acid sequence, 418 residues long: Triacylglycerol lipase 2 (418 aa).

An N-terminal signal peptide occupies residues 1-31; it reads MAGSVMVPSVSIGLALSVLIFFALSLKTLEA. N-linked (GlcNAc...) asparagine glycosylation occurs at N158. The Nucleophile role is filled by S190. N286 and N342 each carry an N-linked (GlcNAc...) asparagine glycan. Active-site charge relay system residues include D360 and H393.

The protein belongs to the AB hydrolase superfamily. Lipase family.

It is found in the secreted. It catalyses the reaction a triacylglycerol + H2O = a diacylglycerol + a fatty acid + H(+). Its function is as follows. Triacylglycerol (TAG) lipase. May be involved for TAG storage breakdown during seed germination. This is Triacylglycerol lipase 2 (LIP2) from Arabidopsis thaliana (Mouse-ear cress).